The following is a 98-amino-acid chain: NADH-ubiquinone oxidoreductase chain 4L (98 aa).

The next 3 membrane-spanning stretches (helical) occupy residues 1 to 21, 29 to 49, and 61 to 81; these read MPYI…GMLI, SLLC…LTIL, and IILL…LVMV.

Belongs to the complex I subunit 4L family. In terms of assembly, core subunit of respiratory chain NADH dehydrogenase (Complex I) which is composed of 45 different subunits.

It is found in the mitochondrion inner membrane. It carries out the reaction a ubiquinone + NADH + 5 H(+)(in) = a ubiquinol + NAD(+) + 4 H(+)(out). Functionally, core subunit of the mitochondrial membrane respiratory chain NADH dehydrogenase (Complex I) which catalyzes electron transfer from NADH through the respiratory chain, using ubiquinone as an electron acceptor. Part of the enzyme membrane arm which is embedded in the lipid bilayer and involved in proton translocation. This Cephalopachus bancanus (Western tarsier) protein is NADH-ubiquinone oxidoreductase chain 4L (MT-ND4L).